Consider the following 201-residue polypeptide: Ras-related protein Rab-9A (201 aa).

The residue at position 2 (alanine 2) is an N-acetylalanine. GTP-binding residues include glycine 17, valine 18, glycine 19, lysine 20, serine 21, serine 22, serine 34, histidine 38, and threonine 39. Position 21 (serine 21) interacts with Mg(2+). Residues 31–42 carry the Switch 1 motif; the sequence is KFDSQLFHTIGV. Serine 34 is subject to Phosphoserine. Residues threonine 39 and aspartate 62 each coordinate Mg(2+). The Switch 2 motif lies at 64–78; it reads AGQERFRSLRTPFYR. GTP contacts are provided by glycine 65, asparagine 124, lysine 125, aspartate 127, and lysine 156. Phosphoserine is present on serine 179. Threonine 187 bears the Phosphothreonine mark. 2 S-geranylgeranyl cysteine lipidation sites follow: cysteine 200 and cysteine 201.

This sequence belongs to the small GTPase superfamily. Rab family. Interacts (preferentially in its GTP-bound form) with GCC2 (via its GRIP domain). Interacts (GTP-bound form) with SGSM1; the GDP-bound form has much lower affinity for SGSM1. Interacts with SGSM2. The GTP-bound form but not the GDP-bound form interacts with HPS4 and the BLOC-3 complex (heterodimer of HPS1 and HPS4) but does not interact with HPS1 alone. Interacts (GTP-bound form) with NDE1; two RAB9A-GTP molecules lie on the opposite sides of the NDE1 homodimer; the interaction leads to RAB9A-dynein motor tethering. Interacts (GTP-bound form) with NDEL1. It depends on Mg(2+) as a cofactor.

It localises to the cell membrane. It is found in the endoplasmic reticulum membrane. The protein localises to the golgi apparatus membrane. Its subcellular location is the late endosome. The protein resides in the cytoplasmic vesicle. It localises to the phagosome membrane. It is found in the phagosome. The protein localises to the cytoplasmic vesicle membrane. Its subcellular location is the melanosome. It catalyses the reaction GTP + H2O = GDP + phosphate + H(+). Its activity is regulated as follows. Regulated by guanine nucleotide exchange factors (GEFs) which promote the exchange of bound GDP for free GTP. Regulated by GTPase activating proteins (GAPs) which increase the GTP hydrolysis activity. Inhibited by GDP dissociation inhibitors (GDIs). In terms of biological role, the small GTPases Rab are key regulators of intracellular membrane trafficking, from the formation of transport vesicles to their fusion with membranes. Rabs cycle between an inactive GDP-bound form and an active GTP-bound form that is able to recruit to membranes different sets of downstream effectors directly responsible for vesicle formation, movement, tethering and fusion. RAB9A is involved in the transport of proteins between the endosomes and the trans-Golgi network (TGN). Specifically uses NDE1/NDEL1 as an effector to interact with the dynein motor complex in order to control retrograde trafficking of RAB9-associated late endosomes to the TGN. Involved in the recruitment of SGSM2 to melanosomes and is required for the proper trafficking of melanogenic enzymes TYR, TYRP1 and DCT/TYRP2 to melanosomes in melanocytes. This chain is Ras-related protein Rab-9A, found in Rattus norvegicus (Rat).